A 204-amino-acid chain; its full sequence is Kunitz-type trypsin inhibitor KTI2 (204 aa).

Positions 1 to 25 (MKSTIFFALFLVCAFTISYLPSATA) are cleaved as a signal peptide. 2 disulfide bridges follow: cysteine 65–cysteine 112 and cysteine 160–cysteine 169.

Belongs to the protease inhibitor I3 (leguminous Kunitz-type inhibitor) family. In terms of tissue distribution, seed, and at low levels in leaf, root, and stem.

Its function is as follows. Has probably no trypsin inhibitor activity. KTi2 is responsible for most of the Kunitz trypsin inhibitor activity and protein found in soybean seeds. This chain is Kunitz-type trypsin inhibitor KTI2 (KTI2), found in Glycine max (Soybean).